A 792-amino-acid polypeptide reads, in one-letter code: Homeobox protein HAZ1 (792 aa).

Positions 1-154 (MDKTTTSDLV…RPPKGGTPKD (154 aa)) are disordered. The segment covering 15 to 36 (NIGSNAGSAQEPLTTNGKTSGV) has biased composition (polar residues). Positions 38–49 (NRYKQTVKRGRK) are enriched in basic residues. Residues 51–67 (SQISPSKTYPLRSSHSN) show a composition bias toward polar residues. The segment covering 95-104 (VAKKRKRSKP) has biased composition (basic residues). The segment covering 116 to 127 (TSEKKNKAHNEL) has biased composition (basic and acidic residues). Residues 244-301 (DIFCAACGSKDVTLKNDIILCDGICDRGFHQYCLNPPLLAEDIPQGDEGWLCPACDCK) form a PHD-type zinc finger. 2 disordered regions span residues 338–495 (QIDA…NSNL) and 529–599 (YGKA…SDQQ). Residues 345–354 (PSDDSADNDY) are compositionally biased toward acidic residues. Residues 362–371 (HKVDEEKSSG) are compositionally biased toward basic and acidic residues. Composition is skewed to acidic residues over residues 373-389 (DGGEGLDSDDSSSEDSE) and 433-453 (DESNSDQSDESDFTSDSDDFC). Residues 610 to 669 (STAKNRHFGPAINQKLKAHFKEDPYPSRATKENLAQELGLTFNQVTKWFSSTRHYARVAA) constitute a DNA-binding region (homeobox). 2 disordered regions span residues 677-697 (ENHTAENNNNTNTVDSIQLRG) and 711-792 (SEER…KTGR). Composition is skewed to polar residues over residues 716-737 (GQSNLNEGTPLRSDTSCGQSVA) and 746-760 (NQGNDSSSNVRTPNA). Positions 774-792 (DEARRKAVQRELRKMKTGR) are enriched in basic and acidic residues.

The protein belongs to the PHD-associated homeobox family. Expressed in roots, leaves, stems, panicle and seeds.

The protein resides in the nucleus. In terms of biological role, transcriptional repressor involved in the regulation of gibberrelin (GA) signaling. Binds to the 5'-GATC-3' motif of HD16/EL1 promoter. Functions as a positive regulator of GA signaling by suppressing the expression of HD16/EL1, a negative regulator of GA signaling. The polypeptide is Homeobox protein HAZ1 (Oryza sativa subsp. japonica (Rice)).